The following is a 493-amino-acid chain: Guanosine-5'-triphosphate,3'-diphosphate pyrophosphatase (493 aa).

This sequence belongs to the GppA/Ppx family. GppA subfamily.

It carries out the reaction guanosine 3'-diphosphate 5'-triphosphate + H2O = guanosine 3',5'-bis(diphosphate) + phosphate + H(+). The protein operates within purine metabolism; ppGpp biosynthesis; ppGpp from GTP: step 2/2. In terms of biological role, catalyzes the conversion of pppGpp to ppGpp. Guanosine pentaphosphate (pppGpp) is a cytoplasmic signaling molecule which together with ppGpp controls the 'stringent response', an adaptive process that allows bacteria to respond to amino acid starvation, resulting in the coordinated regulation of numerous cellular activities. The chain is Guanosine-5'-triphosphate,3'-diphosphate pyrophosphatase from Salmonella dublin (strain CT_02021853).